The following is a 272-amino-acid chain: Shikimate dehydrogenase (NADP(+)) (272 aa).

Shikimate contacts are provided by residues 14-16 (SRS) and threonine 61. Catalysis depends on lysine 65, which acts as the Proton acceptor. Glutamate 77 serves as a coordination point for NADP(+). The shikimate site is built by asparagine 86 and aspartate 102. Residues 126 to 130 (GVGGA), 149 to 154 (NRTFPR), and methionine 213 contribute to the NADP(+) site. A shikimate-binding site is contributed by tyrosine 215. NADP(+) is bound at residue glycine 237.

This sequence belongs to the shikimate dehydrogenase family. In terms of assembly, homodimer.

It carries out the reaction shikimate + NADP(+) = 3-dehydroshikimate + NADPH + H(+). It functions in the pathway metabolic intermediate biosynthesis; chorismate biosynthesis; chorismate from D-erythrose 4-phosphate and phosphoenolpyruvate: step 4/7. Functionally, involved in the biosynthesis of the chorismate, which leads to the biosynthesis of aromatic amino acids. Catalyzes the reversible NADPH linked reduction of 3-dehydroshikimate (DHSA) to yield shikimate (SA). The sequence is that of Shikimate dehydrogenase (NADP(+)) from Sodalis glossinidius (strain morsitans).